The chain runs to 172 residues: Small ribosomal subunit protein uS5 (172 aa).

The 64-residue stretch at 17-80 folds into the S5 DRBM domain; that stretch reads LKEKMIAVNR…EEARRNMTKV (64 aa).

The protein belongs to the universal ribosomal protein uS5 family. Part of the 30S ribosomal subunit. Contacts proteins S4 and S8.

In terms of biological role, with S4 and S12 plays an important role in translational accuracy. Its function is as follows. Located at the back of the 30S subunit body where it stabilizes the conformation of the head with respect to the body. This Polaromonas sp. (strain JS666 / ATCC BAA-500) protein is Small ribosomal subunit protein uS5.